Reading from the N-terminus, the 200-residue chain is ATP synthase subunit b (200 aa).

A helical membrane pass occupies residues 12–32 (ILSGLAVAVAILVPVLALASG).

The protein belongs to the ATPase B chain family. In terms of assembly, F-type ATPases have 2 components, F(1) - the catalytic core - and F(0) - the membrane proton channel. F(1) has five subunits: alpha(3), beta(3), gamma(1), delta(1), epsilon(1). F(0) has three main subunits: a(1), b(2) and c(10-14). The alpha and beta chains form an alternating ring which encloses part of the gamma chain. F(1) is attached to F(0) by a central stalk formed by the gamma and epsilon chains, while a peripheral stalk is formed by the delta and b chains.

The protein resides in the cell inner membrane. Functionally, f(1)F(0) ATP synthase produces ATP from ADP in the presence of a proton or sodium gradient. F-type ATPases consist of two structural domains, F(1) containing the extramembraneous catalytic core and F(0) containing the membrane proton channel, linked together by a central stalk and a peripheral stalk. During catalysis, ATP synthesis in the catalytic domain of F(1) is coupled via a rotary mechanism of the central stalk subunits to proton translocation. In terms of biological role, component of the F(0) channel, it forms part of the peripheral stalk, linking F(1) to F(0). This is ATP synthase subunit b from Trichlorobacter lovleyi (strain ATCC BAA-1151 / DSM 17278 / SZ) (Geobacter lovleyi).